A 421-amino-acid chain; its full sequence is uncharacterized protein (421 aa).

Belongs to the glycosyltransferase 28 family.

This is an uncharacterized protein from Mycobacterium leprae (strain TN).